The sequence spans 119 residues: Ribonuclease P protein component (119 aa).

The protein belongs to the RnpA family. In terms of assembly, consists of a catalytic RNA component (M1 or rnpB) and a protein subunit.

It catalyses the reaction Endonucleolytic cleavage of RNA, removing 5'-extranucleotides from tRNA precursor.. Its function is as follows. RNaseP catalyzes the removal of the 5'-leader sequence from pre-tRNA to produce the mature 5'-terminus. It can also cleave other RNA substrates such as 4.5S RNA. The protein component plays an auxiliary but essential role in vivo by binding to the 5'-leader sequence and broadening the substrate specificity of the ribozyme. The polypeptide is Ribonuclease P protein component (Klebsiella pneumoniae (strain 342)).